We begin with the raw amino-acid sequence, 333 residues long: Probable siderophore transport system permease protein YfiZ (333 aa).

Positions 1–31 (MICKKASSKWIVLVCLIFILLTAVCASVVYG) are cleaved as a signal peptide. Transmembrane regions (helical) follow at residues 64 to 84 (ALVA…MQAL), 94 to 114 (IFGI…FLHI), 119 to 139 (ALVW…YAAG), 152 to 172 (TLAG…LLSV), 193 to 213 (LDLL…CFFL), 246 to 266 (VMLA…GIII), 280 to 300 (WVLP…DIGA), and 303 to 323 (IIMP…MPVF).

This sequence belongs to the binding-protein-dependent transport system permease family. FecCD subfamily. The complex is composed of one ATP-binding protein (YusV), two transmembrane proteins (YfiZ and YfhA) and a solute-binding protein (YfiY).

The protein resides in the cell membrane. Its function is as follows. Part of the ABC transporter complex YfiYZ/YfhA/YusV involved in import of the iron-hydroxamate siderophores schizokinen, arthrobactin and corprogen. The polypeptide is Probable siderophore transport system permease protein YfiZ (yfiZ) (Bacillus subtilis (strain 168)).